A 453-amino-acid chain; its full sequence is Omega-3 fatty acid desaturase, chloroplastic (453 aa).

The Histidine box-1 signature appears at 171-175 (HDCGH). The Histidine box-2 signature appears at 207-211 (HRTHH). The Histidine box-3 motif lies at 374–378 (HVIHH).

The protein belongs to the fatty acid desaturase type 1 family.

The protein localises to the plastid. The protein resides in the chloroplast membrane. The protein operates within lipid metabolism; polyunsaturated fatty acid biosynthesis. Its function is as follows. Chloroplast omega-3 fatty acid desaturase introduces the third double bond in the biosynthesis of 16:3 and 18:3 fatty acids, important constituents of plant membranes. It is thought to use ferredoxin as an electron donor and to act on fatty acids esterified to galactolipids, sulfolipids and phosphatidylglycerol. The polypeptide is Omega-3 fatty acid desaturase, chloroplastic (FAD7) (Glycine max (Soybean)).